The following is a 382-amino-acid chain: Prolargin (382 aa).

The N-terminal stretch at 1 to 20 (MRSPLCWLLPLLILASVAQG) is a signal peptide. The interval 19-66 (QGQPTRRPRPGTGPGRRPRPRPRPTPSFPQPDEPAEPTDLPPPLPPGP) is disordered. Pro residues-rich tracts occupy residues 41–50 (RPTPSFPQPD) and 57–66 (DLPPPLPPGP). LRR repeat units follow at residues 95-114 (RKVPVIPPRIHYLYLQNNFI), 115-138 (TELPVESFQNATGLRWINLDNNRI), 139-162 (RKIDQRVLEKLPGLVFLYMEKNQL), 163-183 (EEVPSALPRNLEQLRLSQNHI), 184-207 (SRIPPGVFSKLENLLLLDLQHNRL), 208-233 (SDGVFKPDTFHGLKNLMQLNLAHNIL), 234-254 (RKMPPRVPTAIHQLYLDSNKI), 255-278 (ETIPNGYFKSFPNLAFIRLNYNKL), 279-303 (TDRGLPKNSFNISNLLVLHLSHNRI), 304-323 (SSVPAINNRLEHLYLNNNSI), 324-362 (EKINGTQICPNDLVAFHDFSSDLENVPHLRYLRLDGNYL), and 363-382 (KPPIPLDLMMCFRLLQSVVI). Residue N124 is glycosylated (N-linked (GlcNAc...) asparagine). N-linked (GlcNAc...) asparagine glycosylation is found at N289, N320, and N327. A disulfide bridge links C332 with C373.

Belongs to the small leucine-rich proteoglycan (SLRP) family. SLRP class II subfamily. In terms of assembly, binds the basement membrane heparan sulfate proteoglycan perlecan and triple helical collagens type I and type II. In terms of processing, glycosylated; contains heparan sulfate. Connective tissue.

The protein resides in the secreted. Its subcellular location is the extracellular space. The protein localises to the extracellular matrix. Its function is as follows. May anchor basement membranes to the underlying connective tissue. This is Prolargin (PRELP) from Homo sapiens (Human).